Consider the following 458-residue polypeptide: RuvB-like helicase 1 (458 aa).

71 to 78 (GGPGTGKT) contributes to the ATP binding site.

Belongs to the RuvB family. May form heterododecamers with hel-2/rvb2. Component of the SWR1 chromatin remodeling complex, the INO80 chromatin remodeling complex, and of the R2TP complex.

It localises to the nucleus. It carries out the reaction ATP + H2O = ADP + phosphate + H(+). Its function is as follows. DNA helicase which participates in several chromatin remodeling complexes, including the SWR1 and the INO80 complexes. The SWR1 complex mediates the ATP-dependent exchange of histone H2A for the H2A variant H2A.Z leading to transcriptional regulation of selected genes by chromatin remodeling. The INO80 complex remodels chromatin by shifting nucleosomes and is involved in DNA repair. Also involved in pre-rRNA processing. The chain is RuvB-like helicase 1 (hel-1) from Neurospora crassa (strain ATCC 24698 / 74-OR23-1A / CBS 708.71 / DSM 1257 / FGSC 987).